A 191-amino-acid chain; its full sequence is Putative glutathione-dependent formaldehyde-activating enzyme (191 aa).

The region spanning 20 to 166 (FAGGNLYCKC…FKAVGLETYD (147 aa)) is the CENP-V/GFA domain. 7 residues coordinate Zn(2+): cysteine 27, cysteine 29, cysteine 48, cysteine 50, cysteine 53, cysteine 95, and cysteine 98.

It belongs to the Gfa family. It depends on Zn(2+) as a cofactor.

The catalysed reaction is S-(hydroxymethyl)glutathione = glutathione + formaldehyde. It functions in the pathway one-carbon metabolism; formaldehyde degradation; formate from formaldehyde (glutathione route): step 1/3. Functionally, catalyzes the condensation of formaldehyde and glutathione to S-hydroxymethylglutathione. The sequence is that of Putative glutathione-dependent formaldehyde-activating enzyme from Aspergillus terreus (strain NIH 2624 / FGSC A1156).